The following is a 280-amino-acid chain: Retinoschisin (280 aa).

A signal peptide spans 1–23 (MHLPREAFLLALAGAFIFPSSQQ). One can recognise an F5/8 type C domain in the interval 119–275 (CPYHRPLGFE…IALRLELLLC (157 aa)). 2 cysteine pairs are disulfide-bonded: C119-C275 and C166-C198.

In terms of assembly, homooctamer of 4 homodimers; disulfide-linked. The homooctamer has a flat, cogwheel structure with a diameter of about 14 nm. Two stacked octamers can assemble to form a hexadecamer.

It localises to the secreted. The protein localises to the cell membrane. Its function is as follows. Binds negatively charged membrane lipids, such as phosphatidylserine and phosphoinositides. May play a role in cell-cell adhesion processes in the retina, via homomeric interaction between octamers present on the surface of two neighboring cells. Required for normal structure and function of the retina. This is Retinoschisin (xlrs1) from Takifugu rubripes (Japanese pufferfish).